Reading from the N-terminus, the 83-residue chain is Large ribosomal subunit protein bL27 (83 aa).

The segment at 1-25 (MAHKKGQGASRNGRDSESKRLGLKV) is disordered.

It belongs to the bacterial ribosomal protein bL27 family.

This chain is Large ribosomal subunit protein bL27, found in Chlamydia muridarum (strain MoPn / Nigg).